The following is a 318-amino-acid chain: UDP-N-acetylenolpyruvoylglucosamine reductase (318 aa).

Residues 38-204 (IGGICPVVVE…LGIEILLKEG (167 aa)) enclose the FAD-binding PCMH-type domain. The active site involves Arg182. Positions 212–232 (SLKDKRDRRNSSQPENKKSAG) are disordered. Positions 213-229 (LKDKRDRRNSSQPENKK) are enriched in basic and acidic residues. The active-site Proton donor is the Ser233. Glu310 is a catalytic residue.

The protein belongs to the MurB family. It depends on FAD as a cofactor.

It localises to the cytoplasm. The catalysed reaction is UDP-N-acetyl-alpha-D-muramate + NADP(+) = UDP-N-acetyl-3-O-(1-carboxyvinyl)-alpha-D-glucosamine + NADPH + H(+). It functions in the pathway cell wall biogenesis; peptidoglycan biosynthesis. In terms of biological role, cell wall formation. This chain is UDP-N-acetylenolpyruvoylglucosamine reductase, found in Leptospira borgpetersenii serovar Hardjo-bovis (strain JB197).